We begin with the raw amino-acid sequence, 91 residues long: Aspartyl/glutamyl-tRNA(Asn/Gln) amidotransferase subunit C (91 aa).

The interval 68–91 is disordered; sequence LDQDDALANAPETEDGRFKGPNVS.

The protein belongs to the GatC family. Heterotrimer of A, B and C subunits.

The enzyme catalyses L-glutamyl-tRNA(Gln) + L-glutamine + ATP + H2O = L-glutaminyl-tRNA(Gln) + L-glutamate + ADP + phosphate + H(+). The catalysed reaction is L-aspartyl-tRNA(Asn) + L-glutamine + ATP + H2O = L-asparaginyl-tRNA(Asn) + L-glutamate + ADP + phosphate + 2 H(+). In terms of biological role, allows the formation of correctly charged Asn-tRNA(Asn) or Gln-tRNA(Gln) through the transamidation of misacylated Asp-tRNA(Asn) or Glu-tRNA(Gln) in organisms which lack either or both of asparaginyl-tRNA or glutaminyl-tRNA synthetases. The reaction takes place in the presence of glutamine and ATP through an activated phospho-Asp-tRNA(Asn) or phospho-Glu-tRNA(Gln). This chain is Aspartyl/glutamyl-tRNA(Asn/Gln) amidotransferase subunit C, found in Halobacterium salinarum (strain ATCC 29341 / DSM 671 / R1).